The primary structure comprises 196 residues: ATP-dependent Clp protease proteolytic subunit (196 aa).

The Nucleophile role is filled by Ser101. His126 is a catalytic residue.

Belongs to the peptidase S14 family. Component of the chloroplastic Clp protease core complex.

It is found in the plastid. The protein resides in the chloroplast stroma. The catalysed reaction is Hydrolysis of proteins to small peptides in the presence of ATP and magnesium. alpha-casein is the usual test substrate. In the absence of ATP, only oligopeptides shorter than five residues are hydrolyzed (such as succinyl-Leu-Tyr-|-NHMec, and Leu-Tyr-Leu-|-Tyr-Trp, in which cleavage of the -Tyr-|-Leu- and -Tyr-|-Trp bonds also occurs).. Functionally, cleaves peptides in various proteins in a process that requires ATP hydrolysis. Has a chymotrypsin-like activity. Plays a major role in the degradation of misfolded proteins. The polypeptide is ATP-dependent Clp protease proteolytic subunit (Pinus thunbergii (Japanese black pine)).